A 259-amino-acid chain; its full sequence is Global transcriptional regulator CodY (259 aa).

The segment at Met-1–Leu-155 is GAF domain. Positions Ala-203–Arg-222 form a DNA-binding region, H-T-H motif.

This sequence belongs to the CodY family.

The protein localises to the cytoplasm. DNA-binding global transcriptional regulator which is involved in the adaptive response to starvation and acts by directly or indirectly controlling the expression of numerous genes in response to nutrient availability. During rapid exponential growth, CodY is highly active and represses genes whose products allow adaptation to nutrient depletion. The chain is Global transcriptional regulator CodY from Exiguobacterium sibiricum (strain DSM 17290 / CCUG 55495 / CIP 109462 / JCM 13490 / 255-15).